A 418-amino-acid polypeptide reads, in one-letter code: D-amino acid dehydrogenase (418 aa).

Residue 3 to 17 participates in FAD binding; that stretch reads VLVLGAGVAGVSSAW.

Belongs to the DadA oxidoreductase family. The cofactor is FAD.

The enzyme catalyses a D-alpha-amino acid + A + H2O = a 2-oxocarboxylate + AH2 + NH4(+). Its function is as follows. Oxidative deamination of D-amino acids. The chain is D-amino acid dehydrogenase from Neisseria meningitidis serogroup A / serotype 4A (strain DSM 15465 / Z2491).